Here is a 148-residue protein sequence, read N- to C-terminus: uncharacterized protein (148 aa).

This is an uncharacterized protein from Acanthamoeba polyphaga mimivirus (APMV).